A 145-amino-acid polypeptide reads, in one-letter code: Putative antiporter subunit mnhG2 (145 aa).

A run of 3 helical transmembrane segments spans residues 11-31 (IAAV…IGIV), 51-71 (VLLT…FFSV), and 72-92 (RLLL…HLVA).

This sequence belongs to the CPA3 antiporters (TC 2.A.63) subunit G family. May form a heterooligomeric complex that consists of seven subunits: mnhA2, mnhB2, mnhC2, mnhD2, mnhE2, mnhF2 and mnhG2.

It is found in the cell membrane. In Staphylococcus aureus (strain MRSA252), this protein is Putative antiporter subunit mnhG2 (mnhG2).